Reading from the N-terminus, the 204-residue chain is Probable GTP-binding protein EngB (204 aa).

Positions 22–197 (GFPEIAFVGR…LAEFDNVLSI (176 aa)) constitute an EngB-type G domain. Residues 30–37 (GRSNVGKS), 57–61 (GKTRQ), 75–78 (DLPG), 144–147 (NKVD), and 176–178 (FSA) contribute to the GTP site. 2 residues coordinate Mg(2+): S37 and T59.

Belongs to the TRAFAC class TrmE-Era-EngA-EngB-Septin-like GTPase superfamily. EngB GTPase family. It depends on Mg(2+) as a cofactor.

Necessary for normal cell division and for the maintenance of normal septation. The chain is Probable GTP-binding protein EngB from Ruminiclostridium cellulolyticum (strain ATCC 35319 / DSM 5812 / JCM 6584 / H10) (Clostridium cellulolyticum).